The following is a 365-amino-acid chain: tRNA(Met) cytidine acetate ligase (365 aa).

ATP contacts are provided by residues 7-20 (IAEF…HKYL), G96, N152, and R175.

This sequence belongs to the TmcAL family.

It is found in the cytoplasm. It carries out the reaction cytidine(34) in elongator tRNA(Met) + acetate + ATP = N(4)-acetylcytidine(34) in elongator tRNA(Met) + AMP + diphosphate. In terms of biological role, catalyzes the formation of N(4)-acetylcytidine (ac(4)C) at the wobble position of elongator tRNA(Met), using acetate and ATP as substrates. First activates an acetate ion to form acetyladenylate (Ac-AMP) and then transfers the acetyl group to tRNA to form ac(4)C34. This is tRNA(Met) cytidine acetate ligase from Streptococcus pneumoniae serotype 4 (strain ATCC BAA-334 / TIGR4).